A 366-amino-acid polypeptide reads, in one-letter code: Chorismate synthase (366 aa).

Arginine 48 serves as a coordination point for NADP(+). Residues 125–127 (RSS), 241–242 (NA), glycine 285, 300–304 (KPTSS), and arginine 326 contribute to the FMN site.

It belongs to the chorismate synthase family. Homotetramer. FMNH2 is required as a cofactor.

The catalysed reaction is 5-O-(1-carboxyvinyl)-3-phosphoshikimate = chorismate + phosphate. It participates in metabolic intermediate biosynthesis; chorismate biosynthesis; chorismate from D-erythrose 4-phosphate and phosphoenolpyruvate: step 7/7. Functionally, catalyzes the anti-1,4-elimination of the C-3 phosphate and the C-6 proR hydrogen from 5-enolpyruvylshikimate-3-phosphate (EPSP) to yield chorismate, which is the branch point compound that serves as the starting substrate for the three terminal pathways of aromatic amino acid biosynthesis. This reaction introduces a second double bond into the aromatic ring system. The sequence is that of Chorismate synthase from Paracoccus denitrificans (strain Pd 1222).